Reading from the N-terminus, the 1048-residue chain is Ceruloplasmin (1048 aa).

The N-terminal stretch at 1 to 19 (MKIFLLCIFLILCGTSVWA) is a signal peptide. Plastocyanin-like domains are found at residues 20–200 (KDKH…LIHC), 209–357 (KEKN…VQDC), and 370–554 (NVRH…MKIC). 3 residues coordinate Na(+): Tyr-55, Gly-64, and Tyr-67. Positions 120 and 122 each coordinate Cu(2+). Residue His-120 participates in O2 binding. Lys-128 provides a ligand contact to Ca(2+). Residue Asn-138 is glycosylated (N-linked (GlcNAc...) asparagine). Gln-143, Asp-146, and Asp-147 together coordinate Ca(2+). A disulfide bridge connects residues Cys-174 and Cys-200. Cu(2+)-binding residues include His-180 and His-182. His-180 contributes to the O2 binding site. Asn-227 carries N-linked (GlcNAc...) asparagine glycosylation. Residue Ser-256 coordinates Na(+). The cysteines at positions 276 and 357 are disulfide-linked. His-295, Cys-338, and His-343 together coordinate Cu(2+). Positions 408, 417, and 420 each coordinate Na(+). Cys-530 and Cys-554 are disulfide-bonded. N-linked (GlcNAc...) asparagine glycans are attached at residues Asn-556 and Asn-582. Residues 564–712 (RLKNVDKEFY…MKQKYTVSQC (149 aa)) form the Plastocyanin-like 4 domain. Residue Ser-611 participates in Na(+) binding. Residues Cys-631 and Cys-712 are joined by a disulfide bond. Residues His-650, Cys-693, His-698, and Met-703 each coordinate Cu(2+). Catalysis depends on Cys-693, which acts as the Nucleophile; for glutathione peroxidase activity. Ser-716 is subject to Phosphoserine. 2 Plastocyanin-like domains span residues 724–894 (GERT…LIVC) and 902–1044 (SNPI…PNEE). Asn-756 carries an N-linked (GlcNAc...) asparagine glycan. Na(+) is bound by residues Phe-761, Gly-770, and Tyr-773. Cysteines 868 and 894 form a disulfide. Asn-920 carries an N-linked (GlcNAc...) asparagine glycan. Ser-949 is a Na(+) binding site. The Cu(2+) site is built by His-977, His-980, His-982, His-1022, Cys-1023, His-1024, His-1028, and Met-1033. O2-binding residues include His-980 and His-982. His-1024 is an O2 binding site.

This sequence belongs to the multicopper oxidase family. Found in a complex with MPO and LTF; interacts directly with MPO and LTF, which allows Fe(3+) incorporation into LTF, activation of CP ferroxidase activity and protection of CP antioxidant properties by MPO. Cu(2+) is required as a cofactor. In terms of tissue distribution, expressed by the liver and secreted in plasma. Also expressed in the hypothalamus, spleen and uterus. No expression in the cortex, heart, intestine or kidney.

Its subcellular location is the secreted. The catalysed reaction is 4 Fe(2+) + O2 + 4 H(+) = 4 Fe(3+) + 2 H2O. It carries out the reaction 4 Cu(+) + O2 + 4 H(+) = 4 Cu(2+) + 2 H2O. The enzyme catalyses a hydroperoxide + 2 glutathione = an alcohol + glutathione disulfide + H2O. It catalyses the reaction 4 nitric oxide + O2 + 2 H2O = 4 nitrite + 4 H(+). The catalysed reaction is 2 glutathione + H2O2 = glutathione disulfide + 2 H2O. Functionally, multifunctional blue, copper-binding (6-7 atoms per molecule) glycoprotein. It has ferroxidase activity oxidizing Fe(2+) to Fe(3+) without releasing radical oxygen species. It is involved in iron transport across the cell membrane. Copper ions provide a large number of enzymatic activites. Oxidizes highly toxic ferrous ions to the ferric state for further incorporation onto apo-transferrins, catalyzes Cu(+) oxidation and promotes the oxidation of biogenic amines such as norepinephrin and serotonin. Provides Cu(2+) ions for the ascorbate-mediated deaminase degradation of the heparan sulfate chains of GPC1. Has glutathione peroxidase-like activity, can remove both hydrogen peroxide and lipid hydroperoxide in the presence of thiols. Also shows NO-oxidase and NO2 synthase activities that determine endocrine NO homeostasis. The polypeptide is Ceruloplasmin (CP) (Ovis aries (Sheep)).